The primary structure comprises 191 residues: Prophage tail fiber assembly protein homolog TfaR (191 aa).

Belongs to the tfa family.

The polypeptide is Prophage tail fiber assembly protein homolog TfaR (tfaR) (Escherichia coli (strain K12)).